Here is a 156-residue protein sequence, read N- to C-terminus: Large ribosomal subunit protein bL9 (156 aa).

Belongs to the bacterial ribosomal protein bL9 family.

In terms of biological role, binds to the 23S rRNA. The chain is Large ribosomal subunit protein bL9 from Treponema pallidum (strain Nichols).